The chain runs to 353 residues: Aliphatic aldoxime dehydratase (353 aa).

An aliphatic aldoxime is bound at residue serine 219. Histidine 299 contacts heme b. Residue histidine 320 coordinates an aliphatic aldoxime. The active site involves histidine 320.

The protein belongs to the heme-containing dehydratase family. Homodimer. The cofactor is heme b.

The catalysed reaction is an aliphatic aldoxime = a nitrile + H2O. With respect to regulation, active when the heme iron is in the ferrous state. The activity is enhanced by reducing agents, such as Na(2)S, Na(2)S(2)(O4), 2-mercaptoethanol, and L-cysteine and supplementary additions of electron acceptors such as flavins, sulfite ion, and vitamin K3. The effect of various chemicals on the enzyme activity is different in the presence and absence of the reducing reagent, Na(2)S, which acts not only as a reductant but also changes the substrate specificity of the enzyme. Functionally, catalyzes the dehydration of aldoximes to their corresponding nitrile. Is active toward various arylalkyl- and alkyl-aldoximes, and to a lesser extent toward aryl-aldoximes. The polypeptide is Aliphatic aldoxime dehydratase (Rhodococcus erythropolis (Arthrobacter picolinophilus)).